A 571-amino-acid chain; its full sequence is Proline--tRNA ligase (571 aa).

Belongs to the class-II aminoacyl-tRNA synthetase family. ProS type 1 subfamily. As to quaternary structure, homodimer.

The protein localises to the cytoplasm. The catalysed reaction is tRNA(Pro) + L-proline + ATP = L-prolyl-tRNA(Pro) + AMP + diphosphate. Functionally, catalyzes the attachment of proline to tRNA(Pro) in a two-step reaction: proline is first activated by ATP to form Pro-AMP and then transferred to the acceptor end of tRNA(Pro). As ProRS can inadvertently accommodate and process non-cognate amino acids such as alanine and cysteine, to avoid such errors it has two additional distinct editing activities against alanine. One activity is designated as 'pretransfer' editing and involves the tRNA(Pro)-independent hydrolysis of activated Ala-AMP. The other activity is designated 'posttransfer' editing and involves deacylation of mischarged Ala-tRNA(Pro). The misacylated Cys-tRNA(Pro) is not edited by ProRS. The chain is Proline--tRNA ligase from Actinobacillus succinogenes (strain ATCC 55618 / DSM 22257 / CCUG 43843 / 130Z).